A 674-amino-acid chain; its full sequence is UvrABC system protein C (674 aa).

One can recognise a GIY-YIG domain in the interval 64–142 (NGPGVYRMLN…IKRLRPRFNV (79 aa)). One can recognise a UVR domain in the interval 252–287 (QAVKATIASAMAEASENLDFERAALYRDRLAALSHV).

Belongs to the UvrC family. As to quaternary structure, interacts with UvrB in an incision complex.

It is found in the cytoplasm. In terms of biological role, the UvrABC repair system catalyzes the recognition and processing of DNA lesions. UvrC both incises the 5' and 3' sides of the lesion. The N-terminal half is responsible for the 3' incision and the C-terminal half is responsible for the 5' incision. This Rhizobium meliloti (strain 1021) (Ensifer meliloti) protein is UvrABC system protein C.